The sequence spans 550 residues: Glucose-6-phosphate isomerase (550 aa).

Residue Glu357 is the Proton donor of the active site. Residues His389 and Lys509 contribute to the active site.

This sequence belongs to the GPI family.

Its subcellular location is the cytoplasm. The enzyme catalyses alpha-D-glucose 6-phosphate = beta-D-fructose 6-phosphate. It participates in carbohydrate biosynthesis; gluconeogenesis. Its pathway is carbohydrate degradation; glycolysis; D-glyceraldehyde 3-phosphate and glycerone phosphate from D-glucose: step 2/4. In terms of biological role, catalyzes the reversible isomerization of glucose-6-phosphate to fructose-6-phosphate. The sequence is that of Glucose-6-phosphate isomerase from Anaeromyxobacter dehalogenans (strain 2CP-C).